The primary structure comprises 105 residues: Small ribosomal subunit protein uS10 (105 aa).

Belongs to the universal ribosomal protein uS10 family. In terms of assembly, part of the 30S ribosomal subunit.

Functionally, involved in the binding of tRNA to the ribosomes. The polypeptide is Small ribosomal subunit protein uS10 (Maridesulfovibrio salexigens (strain ATCC 14822 / DSM 2638 / NCIMB 8403 / VKM B-1763) (Desulfovibrio salexigens)).